The following is a 676-amino-acid chain: Protein cereblon (676 aa).

The segment covering 1–11 (MDDEETAEIDE) has biased composition (acidic residues). Disordered regions lie at residues 1 to 78 (MDDE…TTAH), 118 to 194 (EDAG…AVPR), and 249 to 276 (DDAN…LDVD). Composition is skewed to low complexity over residues 12-33 (TSSS…TETA) and 125-139 (VPQN…TPPA). Residues 156-177 (LVNNDSPSQASISSRHSGSDMS) show a composition bias toward polar residues. The 229-residue stretch at 314–542 (RMLIFMHQHI…IIGTTLKHES (229 aa)) folds into the Lon N-terminal domain. A CULT domain is found at 541–650 (ESLFYCRYCN…LAGSSVRIGK (110 aa)). Zn(2+) is bound by residues C546, C549, C615, and C618.

The protein belongs to the CRBN family. Likely a component of a DCX (DDB1-CUL4-X-box) protein ligase complex. May interact with pic/DDB1. In terms of processing, ubiquitinated.

The protein localises to the nucleus. It participates in protein modification; protein ubiquitination. In terms of biological role, substrate recognition component of a DCX (DDB1-CUL4-X-box) E3 protein ligase complex that mediates the ubiquitination and subsequent proteasomal degradation of target proteins. Has an essential role in mediating growth by negatively regulating insulin signaling. It also has a role in maintaining presynaptic function in the neuromuscular junction synapses of third-instar larvae. The polypeptide is Protein cereblon (Drosophila mojavensis (Fruit fly)).